The sequence spans 84 residues: DNA-directed RNA polymerase subunit Rpo5 (84 aa).

This sequence belongs to the archaeal Rpo5/eukaryotic RPB5 RNA polymerase subunit family. Part of the 13-subunit RNA polymerase.

It is found in the cytoplasm. It catalyses the reaction RNA(n) + a ribonucleoside 5'-triphosphate = RNA(n+1) + diphosphate. Functionally, DNA-dependent RNA polymerase (RNAP) catalyzes the transcription of DNA into RNA using the four ribonucleoside triphosphates as substrates. Its function is as follows. Reconstitution experiments show this subunit is required for basic activity. This is DNA-directed RNA polymerase subunit Rpo5 from Sulfolobus acidocaldarius (strain ATCC 33909 / DSM 639 / JCM 8929 / NBRC 15157 / NCIMB 11770).